Reading from the N-terminus, the 316-residue chain is tRNA uridine(34) hydroxylase (316 aa).

The Rhodanese domain maps to 136-230 (ADENTVVVDK…YLEEVPREQS (95 aa)). Cys190 (cysteine persulfide intermediate) is an active-site residue.

It belongs to the TrhO family.

The enzyme catalyses uridine(34) in tRNA + AH2 + O2 = 5-hydroxyuridine(34) in tRNA + A + H2O. Functionally, catalyzes oxygen-dependent 5-hydroxyuridine (ho5U) modification at position 34 in tRNAs. This is tRNA uridine(34) hydroxylase from Brucella abortus (strain 2308).